The following is a 140-amino-acid chain: Small ribosomal subunit protein uS12 (140 aa).

The tract at residues Lys-33–Pro-55 is disordered. Asp-102 bears the 3-methylthioaspartic acid mark.

It belongs to the universal ribosomal protein uS12 family. As to quaternary structure, part of the 30S ribosomal subunit. Contacts proteins S8 and S17. May interact with IF1 in the 30S initiation complex.

Its function is as follows. With S4 and S5 plays an important role in translational accuracy. Interacts with and stabilizes bases of the 16S rRNA that are involved in tRNA selection in the A site and with the mRNA backbone. Located at the interface of the 30S and 50S subunits, it traverses the body of the 30S subunit contacting proteins on the other side and probably holding the rRNA structure together. The combined cluster of proteins S8, S12 and S17 appears to hold together the shoulder and platform of the 30S subunit. The protein is Small ribosomal subunit protein uS12 of Geobacillus thermodenitrificans (strain NG80-2).